Consider the following 208-residue polypeptide: RxLR effector protein Avr1 (208 aa).

A signal peptide spans 1–22; the sequence is MGLMHRVLLLATFALLCMHAKA. Residues 41 to 54 carry the RxLR-dEER motif; that stretch reads RQLRTATMSDDEAR. The segment at 70–92 is W1-motif; the sequence is KIESWIQNKVTDDFVLSELKLVR. The interval 93 to 110 is linker region ln1; the sequence is LPGTSLADDPNFKLFQKF. The W2-motif stretch occupies residues 111–136; sequence KIGGWLEEKATTTKAWENLGLDSLPF. The segment at 137-157 is Y-motif; the sequence is DQVSKIDEFKTYTQYVTVLNK. The interval 158 to 170 is linker region ln2; that stretch reads KASKLDIDQWHGL. The interval 170 to 208 is T-region; sequence LLSGGSPEELMAKAMILRTLGRDVLERRVMLGGHVVVPF.

This sequence belongs to the RxLR effector family. As to quaternary structure, interacts with host exocyst component Sec5.

It is found in the secreted. The protein resides in the host cytoplasm. It localises to the host nucleus. The protein localises to the host peroxisome. Functionally, secreted effector that acts as an elicitor of hypersensitive response (HR) specifically on plants carrying defense protein R1, through its interaction with this protein. Also acts as a virulence factor that promotes colonization and suppresses cell death induced by CRN2 as well as callose deposition, a hallmark of basal defense. Interacts with host exocyst component Sec5 and thereby disturbs vesicle trafficking, a cellular process that is important for basal defense. By targeting and stabilizing Sec5 in the cytoplasm, the exocyst complex is thus out of balance and not able to mediate the focal secretion of PR-1 and callose. This is RxLR effector protein Avr1 from Phytophthora infestans (strain T30-4) (Potato late blight agent).